Consider the following 54-residue polypeptide: Small polypeptide DEVIL 12 (54 aa).

The tract at residues 20 to 51 is required for DVL/RTFL small polypeptide activity; it reads NNKLTPNRSLKETRSRLYIIRRCLVMLLCWRE. A glycan (N-linked (GlcNAc...) asparagine) is linked at N26. Residues 31–48 traverse the membrane as a helical segment; it reads ETRSRLYIIRRCLVMLLC.

It belongs to the DVL/RTFL small polypeptides family.

It is found in the cell membrane. Functionally, small polypeptide acting as a regulatory molecule which coordinates cellular responses required for differentiation, growth and development, probably by restricting polar cell proliferation in lateral organs and coordinating socket cell recruitment and differentiation at trichome sites. This is Small polypeptide DEVIL 12 from Arabidopsis thaliana (Mouse-ear cress).